The chain runs to 278 residues: Diaminopimelate epimerase (278 aa).

Residues N13, Q46, and N66 each contribute to the substrate site. The active-site Proton donor is C75. Substrate is bound by residues 76 to 77 (GN), N159, N192, and 210 to 211 (ER). Catalysis depends on C219, which acts as the Proton acceptor. 220–221 (GT) contacts substrate.

It belongs to the diaminopimelate epimerase family. Homodimer.

The protein localises to the cytoplasm. It carries out the reaction (2S,6S)-2,6-diaminopimelate = meso-2,6-diaminopimelate. Its pathway is amino-acid biosynthesis; L-lysine biosynthesis via DAP pathway; DL-2,6-diaminopimelate from LL-2,6-diaminopimelate: step 1/1. Its function is as follows. Catalyzes the stereoinversion of LL-2,6-diaminopimelate (L,L-DAP) to meso-diaminopimelate (meso-DAP), a precursor of L-lysine and an essential component of the bacterial peptidoglycan. The chain is Diaminopimelate epimerase from Laribacter hongkongensis (strain HLHK9).